The primary structure comprises 284 residues: RNase adapter protein RapZ (284 aa).

8-15 contributes to the ATP binding site; that stretch reads GRSGSGKS. 56 to 59 serves as a coordination point for GTP; the sequence is DVRN. An RNA-binding region spans residues 266 to 284; sequence RSRGKNVQSRHRTLEKRRS.

The protein belongs to the RapZ-like family. RapZ subfamily. In terms of assembly, homotrimer.

Modulates the synthesis of GlmS, by affecting the processing and stability of the regulatory small RNA GlmZ. When glucosamine-6-phosphate (GlcN6P) concentrations are high in the cell, RapZ binds GlmZ and targets it to cleavage by RNase E. Consequently, GlmZ is inactivated and unable to activate GlmS synthesis. Under low GlcN6P concentrations, RapZ is sequestered and inactivated by an other regulatory small RNA, GlmY, preventing GlmZ degradation and leading to synthesis of GlmS. The chain is RNase adapter protein RapZ from Erwinia tasmaniensis (strain DSM 17950 / CFBP 7177 / CIP 109463 / NCPPB 4357 / Et1/99).